A 512-amino-acid polypeptide reads, in one-letter code: Cytochrome P450 monooxygenase paxQ (512 aa).

Helical transmembrane passes span 3–23 and 35–55; these read FVLS…LVSI and LQIP…ISAL. C453 contacts heme.

Belongs to the cytochrome P450 family. Heme is required as a cofactor.

The protein localises to the membrane. The protein operates within secondary metabolite biosynthesis. In terms of biological role, cytochrome P450 monooxygenase; part of the gene cluster that mediates the biosynthesis of paxilline, a mycotoxin that acts as an inhibitor of mammalian maxi-K channels. PaxG, the geranylgeranyl diphosphate (GGPP) synthase is proposed to catalyze the first step in paxilline biosynthesis. Condensation of indole-3-glycerol phosphate with GGPP by paxC then forms 3-geranylgeranylindole (3-GGI), followed by epoxidation and cyclization of this intermediate (by paxM and paxB) to form paspaline. Paspaline is subsequently converted to 13-desoxypaxilline by paxP, the latter being then converted to paxilline by paxQ. Finally paxilline can be mono- and di-prenylated by paxD. PaxQ can also utilized beta-paxitriol and alpha-PC-M6 as substrates converting them to alpha-paxitriol. This Penicillium paxilli protein is Cytochrome P450 monooxygenase paxQ.